Reading from the N-terminus, the 180-residue chain is 3-hydroxyanthranilate 3,4-dioxygenase (180 aa).

Position 44 (arginine 44) interacts with O2. The Fe cation site is built by histidine 48, glutamate 54, and histidine 92. Residue glutamate 54 participates in substrate binding. Positions 96 and 106 each coordinate substrate. 4 residues coordinate a divalent metal cation: cysteine 121, cysteine 124, cysteine 158, and cysteine 161.

Belongs to the 3-HAO family. The cofactor is Fe(2+).

It is found in the cytoplasm. The catalysed reaction is 3-hydroxyanthranilate + O2 = (2Z,4Z)-2-amino-3-carboxymuconate 6-semialdehyde. Its pathway is cofactor biosynthesis; NAD(+) biosynthesis; quinolinate from L-kynurenine: step 3/3. In terms of biological role, catalyzes the oxidative ring opening of 3-hydroxyanthranilate to 2-amino-3-carboxymuconate semialdehyde, which spontaneously cyclizes to quinolinate. In Neurospora crassa (strain ATCC 24698 / 74-OR23-1A / CBS 708.71 / DSM 1257 / FGSC 987), this protein is 3-hydroxyanthranilate 3,4-dioxygenase (bna1).